Reading from the N-terminus, the 157-residue chain is Cell cycle regulator of non-homologous end joining (157 aa).

Residue M1 is modified to N-acetylmethionine. Residues 1–21 (METLKSKTKTRVLPSWMTAPV) carry the KBM motif. Residues 80–91 (KPWEQRSLEATD) are compositionally biased toward basic and acidic residues. Residues 80-148 (KPWEQRSLEA…EEEKEEEDAL (69 aa)) form a disordered region. Low complexity predominate over residues 96 to 106 (SPPCSSSPGSS). The XLM signature appears at 147–157 (ALKYVREIFFS).

As to quaternary structure, interacts (via KBM motif) with XRCC5/Ku80 and XRCC6/Ku70 heterodimer. Interacts (via XLF motif) with TRIM28/KAP1, ATM, MRE11, NBN and RAD50. Interacts with splicing factor SF3B1. Interacts with ERCC6L2; this interaction is DNA independent.

It is found in the cytoplasm. Its subcellular location is the nucleus. It localises to the chromosome. Cell-cycle-specific regulator of classical non-homologous end joining (NHEJ) of DNA double-strand break (DSB) repair, which can act both as an activator or inhibitor of NHEJ, depending on the cell cycle phase. Acts as a regulator of DNA repair pathway choice by specifically inhibiting classical NHEJ during the S and G2 phases, thereby promoting error-free repair by homologous recombination during cell cycle phases when sister chromatids are present. Preferentially protects single-stranded overhangs at break sites by inhibiting classical NHEJ, thereby creating a local environment that favors homologous recombination. Acts via interaction with XRCC5/Ku80 and XRCC6/Ku70. In contrast, acts as an activator of NHEJ during G1 phase of the cell cycle: promotes classical NHEJ in G1 phase cells via multivalent interactions that increase the affinity of DNA damage response proteins for DSB-associated chromatin. Also involved in immunoglobulin V(D)J recombination. May also act as an indirect regulator of proteasome. The sequence is that of Cell cycle regulator of non-homologous end joining from Mus musculus (Mouse).